The primary structure comprises 489 residues: Glutamate--tRNA ligase (489 aa).

The 'HIGH' region signature appears at 11-21 (PSPTGHLHIGG). The short motif at 253–257 (KLSKR) is the 'KMSKS' region element. K256 provides a ligand contact to ATP.

This sequence belongs to the class-I aminoacyl-tRNA synthetase family. Glutamate--tRNA ligase type 1 subfamily. Monomer.

Its subcellular location is the cytoplasm. The catalysed reaction is tRNA(Glu) + L-glutamate + ATP = L-glutamyl-tRNA(Glu) + AMP + diphosphate. In terms of biological role, catalyzes the attachment of glutamate to tRNA(Glu) in a two-step reaction: glutamate is first activated by ATP to form Glu-AMP and then transferred to the acceptor end of tRNA(Glu). In Geobacillus stearothermophilus (Bacillus stearothermophilus), this protein is Glutamate--tRNA ligase.